The primary structure comprises 111 residues: Beta-2-microglobulin (111 aa).

The first 17 residues, 1-17, serve as a signal peptide directing secretion; that stretch reads MRALILLSLGLLRVAVP. Positions 20–111 constitute an Ig-like C1-type domain; that stretch reads PQVVVYTYKP…KTSIYKLESF (92 aa).

The protein belongs to the beta-2-microglobulin family. Heterodimer of an alpha chain and a beta chain. Beta-2-microglobulin is the beta-chain of major histocompatibility complex class I molecules.

The protein resides in the secreted. Functionally, component of the class I major histocompatibility complex (MHC). Involved in the presentation of peptide antigens to the immune system. The chain is Beta-2-microglobulin (b2m) from Rostroraja eglanteria (Clearnose skate).